The following is a 390-amino-acid chain: Lipid-A-disaccharide synthase (390 aa).

Belongs to the LpxB family.

It catalyses the reaction a lipid X + a UDP-2-N,3-O-bis[(3R)-3-hydroxyacyl]-alpha-D-glucosamine = a lipid A disaccharide + UDP + H(+). It functions in the pathway bacterial outer membrane biogenesis; LPS lipid A biosynthesis. Functionally, condensation of UDP-2,3-diacylglucosamine and 2,3-diacylglucosamine-1-phosphate to form lipid A disaccharide, a precursor of lipid A, a phosphorylated glycolipid that anchors the lipopolysaccharide to the outer membrane of the cell. In Haemophilus influenzae (strain ATCC 51907 / DSM 11121 / KW20 / Rd), this protein is Lipid-A-disaccharide synthase (lpxB).